The sequence spans 130 residues: Small ribosomal subunit protein uS11 (130 aa).

The protein belongs to the universal ribosomal protein uS11 family. In terms of assembly, part of the 30S ribosomal subunit. Interacts with proteins S7 and S18. Binds to IF-3.

Its function is as follows. Located on the platform of the 30S subunit, it bridges several disparate RNA helices of the 16S rRNA. Forms part of the Shine-Dalgarno cleft in the 70S ribosome. This is Small ribosomal subunit protein uS11 from Blochmanniella floridana.